We begin with the raw amino-acid sequence, 155 residues long: Gene 27 protein (155 aa).

The interval 41-114 is disordered; it reads KAKTQGMNVP…KAPENPNLPN (74 aa). 2 stretches are compositionally biased toward basic and acidic residues: residues 55–68 and 78–95; these read KKPE…EKPT and TAKE…ETKA.

Required for late gene transcription and DNA replication. The protein is Gene 27 protein (27) of Bacillus subtilis (Bacteriophage SP01).